The following is a 44-amino-acid chain: Photosystem I reaction center subunit IX (44 aa).

A helical transmembrane segment spans residues 9 to 29 (FMRSAPIVAAIWISLTAGIII).

It belongs to the PsaJ family.

Its subcellular location is the cellular thylakoid membrane. May help in the organization of the PsaE and PsaF subunits. This Prochlorococcus marinus (strain MIT 9515) protein is Photosystem I reaction center subunit IX.